Here is a 148-residue protein sequence, read N- to C-terminus: Large ribosomal subunit protein uL15 (148 aa).

The segment at 1–51 (MNLSNLKPAEGSTKTRKRIGRGPGSGLGGTSTRGHKGAKSRSGYKNKIGFE) is disordered. Residues 21–31 (RGPGSGLGGTS) show a composition bias toward gly residues. The segment covering 33 to 44 (RGHKGAKSRSGY) has biased composition (basic residues).

Belongs to the universal ribosomal protein uL15 family. In terms of assembly, part of the 50S ribosomal subunit.

In terms of biological role, binds to the 23S rRNA. This Parabacteroides distasonis (strain ATCC 8503 / DSM 20701 / CIP 104284 / JCM 5825 / NCTC 11152) protein is Large ribosomal subunit protein uL15.